The chain runs to 205 residues: Isochorismatase domain-containing protein 2 (205 aa).

Phosphoserine occurs at positions 7 and 202.

This sequence belongs to the isochorismatase family. In terms of assembly, interacts with CDKN2A.

It is found in the cytoplasm. Its subcellular location is the nucleus. This Pongo abelii (Sumatran orangutan) protein is Isochorismatase domain-containing protein 2 (ISOC2).